A 254-amino-acid polypeptide reads, in one-letter code: uncharacterized protein (254 aa).

The protein belongs to the nucleoside-specific channel-forming outer membrane porin (Tsx) (TC 1.B.10) family.

This is an uncharacterized protein from Escherichia coli (strain K12).